Reading from the N-terminus, the 236-residue chain is Kinetochore protein Spc25 (236 aa).

Residues 44–106 (KNIISAKEAI…DMEAQLLRHT (63 aa)) are a coiled coil. The segment at 194 to 217 (EVAGASPVTPSGSERPKATSKHSN) is disordered.

It belongs to the SPC25 family. Component of the Ndc80 complex, which is composed of Ndc80, Nuf2 and Spc25.

The protein resides in the nucleus. It is found in the chromosome. The protein localises to the centromere. It localises to the kinetochore. In terms of biological role, acts as a component of the essential kinetochore-associated Ndc80 complex, which is required for chromosome segregation and spindle checkpoint activity during meiosis and mitosis. Required for kinetochore integrity and the organization of stable microtubule binding sites in the outer plate of the kinetochore. Participates in SAC signaling that responds specifically to disruptions in spindle microtubule dynamics. The NDC80 complex synergistically enhances the affinity of the SKA1 complex for microtubules and may allow the NDC80 complex to track depolymerizing microtubules. This chain is Kinetochore protein Spc25, found in Drosophila persimilis (Fruit fly).